The primary structure comprises 621 residues: Myosin-binding protein C, slow-type (621 aa).

Ig-like C2-type domains lie at 1–53, 54–142, and 144–241; these read EEIV…VDLR, PLKI…HVID, and PKII…LWIS. Phosphothreonine is present on threonine 28. Serine 233 carries the phosphoserine modification. Fibronectin type-III domains lie at 244 to 343, 344 to 459, and 556 to 621; these read LRLA…TSPP, TLLA…IEPP, and PPQA…VIGN. At threonine 420 the chain carries Phosphothreonine. Position 445 is a phosphotyrosine (tyrosine 445). Residues 459–553 form the Ig-like C2-type 4 domain; sequence PKIRIPRHLK…ASIDIQIVDR (95 aa).

Belongs to the immunoglobulin superfamily. MyBP family. As to quaternary structure, interacts with USP25 (isoform USP25m only); the interaction prevents proteasomal degradation of MYBPC1.

Thick filament-associated protein located in the crossbridge region of vertebrate striated muscle a bands. Slow skeletal protein that binds to both myosin and actin. In vitro, binds to native thin filaments and modifies the activity of actin-activated myosin ATPase. May modulate muscle contraction or may play a more structural role. The sequence is that of Myosin-binding protein C, slow-type (Mybpc1) from Rattus norvegicus (Rat).